The sequence spans 330 residues: Ferredoxin--NADP reductase (330 aa).

FAD is bound by residues Glu35, Gln43, Tyr48, Val90, Phe123, Asp285, and Thr326.

Belongs to the ferredoxin--NADP reductase type 2 family. As to quaternary structure, homodimer. FAD serves as cofactor.

The catalysed reaction is 2 reduced [2Fe-2S]-[ferredoxin] + NADP(+) + H(+) = 2 oxidized [2Fe-2S]-[ferredoxin] + NADPH. The chain is Ferredoxin--NADP reductase from Streptococcus pyogenes serotype M3 (strain ATCC BAA-595 / MGAS315).